A 324-amino-acid chain; its full sequence is Proto-oncogene Mas (324 aa).

Residues 1–35 (MDQSNMTSFAEEKAMNTSSRNASLGTSHPPIPIVH) lie on the Extracellular side of the membrane. 3 N-linked (GlcNAc...) asparagine glycosylation sites follow: Asn5, Asn16, and Asn21. The chain crosses the membrane as a helical span at residues 36-60 (WVIMSISPLGFVENGILLWFLCFRM). Residues 61 to 64 (RRNP) are Cytoplasmic-facing. The helical transmembrane segment at 65–86 (FTVYITHLSIADISLLFCIFIL) threads the bilayer. Over 87–103 (SIDYALDYELSSGHYYT) the chain is Extracellular. Residues 104–127 (IVTLSVTFLFGYNTGLYLLTAISV) traverse the membrane as a helical segment. Residues 128–148 (ERCLSVLYPIWYRCHRPKHQS) lie on the Cytoplasmic side of the membrane. Residues 149–171 (AFVCALLWALSCLVTTMEYVMCI) traverse the membrane as a helical segment. Residues 172–184 (DSGEESHSQSDCR) lie on the Extracellular side of the membrane. The helical transmembrane segment at 185-205 (AVIIFIAILSFLVFTPLMLVS) threads the bilayer. Residues 206–223 (STILVVKIRKNTWASHSS) lie on the Cytoplasmic side of the membrane. Residues 224–244 (KLYIVIMVTIIIFLIFAMPMR) form a helical membrane-spanning segment. Residues 245–262 (VLYLLYYEYWSTFGNLHN) are Extracellular-facing. Residues 263–283 (ISLLFSTINSSANPFIYFFVG) traverse the membrane as a helical segment. Over 284–324 (SSKKKRFRESLKVVLTRAFKDEMQPRRQEGNGNTVSIETVV) the chain is Cytoplasmic.

Belongs to the G-protein coupled receptor 1 family. In terms of assembly, interacts with AGTR1. Interacts with FLNA (via filamin repeat 21); increases PKA-mediated phosphorylation of FLNA. As to expression, expressed in platelets.

The protein localises to the cell membrane. Functionally, receptor for angiotensin 1-7. Acts specifically as a functional antagonist of AGTR1 (angiotensin-2 type 1 receptor), although it up-regulates AGTR1 receptor levels. Positive regulation of AGTR1 levels occurs through activation of the G-proteins GNA11 and GNAQ, and stimulation of the protein kinase C signaling cascade. The antagonist effect on AGTR1 function is probably due to AGTR1 being physically altered by MAS1. In Rattus norvegicus (Rat), this protein is Proto-oncogene Mas (Mas1).